Consider the following 468-residue polypeptide: Malate-2H(+)/Na(+)-lactate antiporter (468 aa).

The next 12 helical transmembrane spans lie at 9-29 (LFEI…FTVF), 30-50 (LDLP…LLGI), 73-93 (AVLI…GGVV), 96-116 (LIYY…TLII), 136-156 (IAMI…AGAI), 192-212 (LYLS…VGFM), 233-253 (TFDI…LLAM), 258-278 (MPVI…FQGM), 309-329 (IVGM…GGLL), 357-377 (LIVA…LILT), 405-425 (LTSG…ILGV), and 428-448 (FSYL…IIYG).

This sequence belongs to the NhaC Na(+)/H(+) (TC 2.A.35) antiporter family.

The protein localises to the cell membrane. Its function is as follows. Couples proton uptake and Na(+) efflux to the substrate-product malate/lactate antiport, in an electroneutral malate-2H(+)/Na(+)-lactate exchange. Plays a role in supporting growth to high density on malate at reduced protonmotive force. This is Malate-2H(+)/Na(+)-lactate antiporter (mleN) from Bacillus subtilis (strain 168).